Reading from the N-terminus, the 396-residue chain is 1-deoxy-D-xylulose 5-phosphate reductoisomerase (396 aa).

NADPH-binding residues include Thr-15, Gly-16, Ser-17, Ile-18, Gly-41, and Asn-130. Position 131 (Lys-131) interacts with 1-deoxy-D-xylulose 5-phosphate. Glu-132 contributes to the NADPH binding site. Asp-155 is a Mn(2+) binding site. 1-deoxy-D-xylulose 5-phosphate is bound by residues Ser-156, Glu-157, Ser-181, and His-204. Glu-157 contacts Mn(2+). An NADPH-binding site is contributed by Gly-210. 4 residues coordinate 1-deoxy-D-xylulose 5-phosphate: Ser-217, Asn-222, Lys-223, and Glu-226. Glu-226 lines the Mn(2+) pocket.

The protein belongs to the DXR family. Mg(2+) is required as a cofactor. Mn(2+) serves as cofactor.

It carries out the reaction 2-C-methyl-D-erythritol 4-phosphate + NADP(+) = 1-deoxy-D-xylulose 5-phosphate + NADPH + H(+). The protein operates within isoprenoid biosynthesis; isopentenyl diphosphate biosynthesis via DXP pathway; isopentenyl diphosphate from 1-deoxy-D-xylulose 5-phosphate: step 1/6. Its function is as follows. Catalyzes the NADPH-dependent rearrangement and reduction of 1-deoxy-D-xylulose-5-phosphate (DXP) to 2-C-methyl-D-erythritol 4-phosphate (MEP). In Bifidobacterium longum (strain DJO10A), this protein is 1-deoxy-D-xylulose 5-phosphate reductoisomerase.